Consider the following 671-residue polypeptide: RNA polymerase sigma factor RpoD (671 aa).

Disordered regions lie at residues 1–45 (MKKK…SKIK) and 229–260 (DDDE…VSEK). Residues 251–260 (EERKKVVSEK) show a composition bias toward basic and acidic residues. Positions 436-506 (MAKSNLRLVV…SRAIADQART (71 aa)) are sigma-70 factor domain-2. The short motif at 460–463 (DLIQ) is the Interaction with polymerase core subunit RpoC element. Positions 515-591 (DTINRINKVM…DKNIVSSIDH (77 aa)) are sigma-70 factor domain-3. Residues 604 to 658 (VLDQLNEREKAVIRMRFGLLDDESDRTLEEIGKELNVTRERVRQIESSAIKKLRS) are sigma-70 factor domain-4. A DNA-binding region (H-T-H motif) is located at residues 631 to 650 (LEEIGKELNVTRERVRQIES).

Belongs to the sigma-70 factor family. RpoD/SigA subfamily. Interacts transiently with the RNA polymerase catalytic core.

The protein resides in the cytoplasm. Functionally, sigma factors are initiation factors that promote the attachment of RNA polymerase to specific initiation sites and are then released. This sigma factor is the primary sigma factor during exponential growth. The chain is RNA polymerase sigma factor RpoD from Helicobacter pylori (strain ATCC 700392 / 26695) (Campylobacter pylori).